A 222-amino-acid polypeptide reads, in one-letter code: Twisted gastrulation protein homolog 1 (222 aa).

A signal peptide spans 1–24; it reads MKSHYIVLALASLTFLLCLPVSQS. Residues asparagine 80 and asparagine 146 are each glycosylated (N-linked (GlcNAc...) asparagine).

It belongs to the twisted gastrulation protein family. Interacts with CHRD and/or BMP4. This interaction enhances CHRD/BMP4 complex formation. Interacts with BMP7. As to expression, expressed in lymph node, liver, kidney, and lung. Expression in the kidney was stronger in the medulla than in the cortex, particularly in the cells surrounding the medullary tubules. Expressed in growth plate cartilage of long bones, ribs, and digits and to a lesser extent also in the resting zone of the epiphysis, trabecular bone, and vertebral cartilage. Expression seems to be absent from other skeletal tissues including muscle, skin, and fibroblasts.

The protein localises to the secreted. In terms of biological role, may be involved in dorsoventral axis formation. Seems to antagonize BMP signaling by forming ternary complexes with CHRD and BMPs, thereby preventing BMPs from binding to their receptors. In addition to the anti-BMP function, also has pro-BMP activity, partly mediated by cleavage and degradation of CHRD, which releases BMPs from ternary complexes. May be an important modulator of BMP-regulated cartilage development and chondrocyte differentiation. May play a role in thymocyte development. The chain is Twisted gastrulation protein homolog 1 (Twsg1) from Mus musculus (Mouse).